Consider the following 265-residue polypeptide: Small ribosomal subunit protein uS3 (265 aa).

The 73-residue stretch at 39 to 111 (IREFLNENFS…EVILNIIEVR (73 aa)) folds into the KH type-2 domain. Positions 224-250 (FEAGNQRRGQKRRPRNDQPVKDLNKEK) are disordered. A compositionally biased stretch (basic and acidic residues) spans 238-250 (RNDQPVKDLNKEK).

This sequence belongs to the universal ribosomal protein uS3 family. Part of the 30S ribosomal subunit. Forms a tight complex with proteins S10 and S14.

In terms of biological role, binds the lower part of the 30S subunit head. Binds mRNA in the 70S ribosome, positioning it for translation. This chain is Small ribosomal subunit protein uS3, found in Acholeplasma laidlawii.